Here is a 122-residue protein sequence, read N- to C-terminus: MIQTETRLKVADNSGAKIVYCIKVLGGSRRRYATVGDVIVVSVKEAIPNSKVKKGDVLKAVIVRTKKEIKRPDGSYIRFDENSAVLISGNNEPLGTRIFGPVARELRAKRFMKIVSLAPEVL.

It belongs to the universal ribosomal protein uL14 family. As to quaternary structure, part of the 50S ribosomal subunit. Forms a cluster with proteins L3 and L19. In the 70S ribosome, L14 and L19 interact and together make contacts with the 16S rRNA in bridges B5 and B8.

In terms of biological role, binds to 23S rRNA. Forms part of two intersubunit bridges in the 70S ribosome. This Desulfosudis oleivorans (strain DSM 6200 / JCM 39069 / Hxd3) (Desulfococcus oleovorans) protein is Large ribosomal subunit protein uL14.